The primary structure comprises 603 residues: Keratin, type II cuticular Hb4 (603 aa).

A head region spans residues 1–173 (MSCRSYRVSS…PNAQRVKRDE (173 aa)). Positions 173-484 (EKEQIKTLNN…RLLEGEEIRI (312 aa)) constitute an IF rod domain. Positions 174–208 (KEQIKTLNNKFASFIDKVRFLEQQNKLLETKWSFL) are coil 1A. The interval 209 to 218 (QEQKCARSNL) is linker 1. A coil 1B region spans residues 219-319 (EPLFDNYITN…YHEEIEMLQS (101 aa)). The interval 320-336 (HISETSVIVKMDNSRDL) is linker 12. A coil 2 region spans residues 337 to 480 (NLDGIIAEVK…VTYRRLLEGE (144 aa)). The segment at 481 to 603 (EIRICEGVGP…STTTSRRTRY (123 aa)) is tail. The tract at residues 579–603 (CSGGRGNRSSSVRFSSTTTSRRTRY) is disordered.

It belongs to the intermediate filament family. As to quaternary structure, heterotetramer of two type I and two type II keratins. In skin, only expressed in the suprabasal cells of tail scale epidermis. Suprabasally expressed in stratified squamous epithelia and also in the posterior unit of the complex filiform papillae of tongue. Expressed in rare anatomical sites in which an orthokeratinized stratum corneum would be too soft and a hard keratinized structure would be too rigid to meet the functional requirement of the respective epithelia.

The chain is Keratin, type II cuticular Hb4 (Krt84) from Mus musculus (Mouse).